The primary structure comprises 126 residues: Small ribosomal subunit protein uS12m (126 aa).

Disordered stretches follow at residues 1–27 (MPTM…LNKC) and 106–126 (GIPG…KDYI). Basic residues-rich tracts occupy residues 12–23 (RESKRRTKRTRA) and 109–120 (GRRRGRSKYGTK).

The protein belongs to the universal ribosomal protein uS12 family.

The protein resides in the mitochondrion. Its function is as follows. Protein S12 is involved in the translation initiation step. In Marchantia polymorpha (Common liverwort), this protein is Small ribosomal subunit protein uS12m (RPS12).